The chain runs to 257 residues: Phosphonates import ATP-binding protein PhnC 1 (257 aa).

The 245-residue stretch at 2–246 (IELKNVSKVY…VFKDIYGRPL (245 aa)) folds into the ABC transporter domain. Residue 35–42 (GLSGAGKS) coordinates ATP.

It belongs to the ABC transporter superfamily. Phosphonates importer (TC 3.A.1.9.1) family. The complex is composed of two ATP-binding proteins (PhnC), two transmembrane proteins (PhnE) and a solute-binding protein (PhnD).

It localises to the cell membrane. It carries out the reaction phosphonate(out) + ATP + H2O = phosphonate(in) + ADP + phosphate + H(+). Its function is as follows. Part of the ABC transporter complex PhnCDE involved in phosphonates import. Responsible for energy coupling to the transport system. The protein is Phosphonates import ATP-binding protein PhnC 1 of Halalkalibacterium halodurans (strain ATCC BAA-125 / DSM 18197 / FERM 7344 / JCM 9153 / C-125) (Bacillus halodurans).